The chain runs to 606 residues: Kelch-like protein 41 (606 aa).

Serine 3 bears the Phosphoserine mark. The region spanning 33 to 100 (IDCTLKAGDK…LYSASIDLND (68 aa)) is the BTB domain. One can recognise a BACK domain in the interval 135–237 (CLAILRLGLL…AEKYFKDHVE (103 aa)). Kelch repeat units lie at residues 346–398 (QVYV…EVDD), 399–447 (KIYV…SHNG), 448–495 (MIYC…IHKG), 497–542 (IVIA…SLAG), and 544–599 (LYAI…TRLN).

In terms of assembly, interacts with NRAP. Part of a complex that contains CUL3, RBX1 and KLHL41. Interacts with LASP1. In terms of processing, ubiquitinated by E3 ubiquitin ligase complex formed by CUL3 and RBX1 and probably targeted for proteasome-independent degradation. Quinone-induced oxidative stress increases its ubiquitination. As to expression, skeletal muscle. Localized between laterally fusing myofibrils in skeletal muscle (at protein level). Expressed at a lower level in the heart compared to skeletal muscle.

Its subcellular location is the cytoplasm. It localises to the cytoskeleton. The protein localises to the cell projection. It is found in the pseudopodium. The protein resides in the ruffle. Its subcellular location is the myofibril. It localises to the sarcomere. The protein localises to the m line. It is found in the sarcoplasmic reticulum membrane. The protein resides in the endoplasmic reticulum membrane. Involved in skeletal muscle development and differentiation. Regulates proliferation and differentiation of myoblasts and plays a role in myofibril assembly by promoting lateral fusion of adjacent thin fibrils into mature, wide myofibrils. Required for pseudopod elongation in transformed cells. This chain is Kelch-like protein 41 (Klhl41), found in Mus musculus (Mouse).